Here is a 277-residue protein sequence, read N- to C-terminus: Putative protease slr0021 (277 aa).

S85 functions as the Nucleophile in the catalytic mechanism. Catalysis depends on K137, which acts as the Proton donor/acceptor.

It belongs to the peptidase S49 family.

The chain is Putative protease slr0021 from Synechocystis sp. (strain ATCC 27184 / PCC 6803 / Kazusa).